The following is a 107-amino-acid chain: UPF0145 protein Spro_1658 (107 aa).

Belongs to the UPF0145 family.

This Serratia proteamaculans (strain 568) protein is UPF0145 protein Spro_1658.